The chain runs to 585 residues: A-type ATP synthase subunit A (585 aa).

235–242 (GPFGSGKT) provides a ligand contact to ATP.

Belongs to the ATPase alpha/beta chains family. As to quaternary structure, has multiple subunits with at least A(3), B(3), C, D, E, F, H, I and proteolipid K(x).

It localises to the cell membrane. It catalyses the reaction ATP + H2O + 4 H(+)(in) = ADP + phosphate + 5 H(+)(out). In terms of biological role, component of the A-type ATP synthase that produces ATP from ADP in the presence of a proton gradient across the membrane. The A chain is the catalytic subunit. This Halobacterium salinarum (strain ATCC 29341 / DSM 671 / R1) protein is A-type ATP synthase subunit A.